Reading from the N-terminus, the 1223-residue chain is A disintegrin and metalloproteinase with thrombospondin motifs 14 (1223 aa).

Positions 1–22 (MAPLRALLSYLLPLHCALCAAA) are cleaved as a signal peptide. The propeptide occupies 23–252 (GSRTPELHLS…QLGDTERKRR (230 aa)). A glycan (N-linked (GlcNAc...) asparagine) is linked at asparagine 109. Positions 259 to 460 (YSIEVLLVVD…PSYDCLLDDP (202 aa)) constitute a Peptidase M12B domain. Intrachain disulfides connect cysteine 336–cysteine 382, cysteine 376–cysteine 455, and cysteine 415–cysteine 441. Histidine 398 is a Zn(2+) binding site. The active site involves glutamate 399. Histidine 402 and histidine 408 together coordinate Zn(2+). The Disintegrin domain occupies 461-551 (FDPAWPQPPE…WKSPEQTYGQ (91 aa)). Residue asparagine 475 is glycosylated (N-linked (GlcNAc...) asparagine). 7 disulfides stabilise this stretch: cysteine 482/cysteine 507, cysteine 493/cysteine 516, cysteine 502/cysteine 535, cysteine 529/cysteine 540, cysteine 564/cysteine 601, cysteine 568/cysteine 606, and cysteine 579/cysteine 591. One can recognise a TSP type-1 1 domain in the interval 552–607 (DGGWSSWTKFGSCSRSCGGGVRSRSRSCNNPSPAYGGRLCLGPMFEYQVCNSEECP). The tract at residues 730–846 (LKLVQIPAGA…GSNNVLLEEM (117 aa)) is spacer. 3 consecutive TSP type-1 domains span residues 847–907 (DTYE…HPCS), 908–967 (QPVW…LRVP), and 968–1022 (CPAQ…PACG). The N-linked (GlcNAc...) asparagine glycan is linked to asparagine 941. Cystine bridges form between cysteine 980–cysteine 1016, cysteine 984–cysteine 1021, and cysteine 995–cysteine 1005. A glycan (N-linked (GlcNAc...) asparagine) is linked at asparagine 1027. In terms of domain architecture, PLAC spans 1059 to 1097 (STEPCTGDRSVFCQMEVLDRYCSIPGYHRLCCVSCIKKA). The interval 1100–1223 (PNPGPDPGPT…TSLPAASPVT (124 aa)) is disordered. The segment covering 1101-1125 (NPGPDPGPTSLPPFSTPGSPLPGPQ) has biased composition (pro residues). The span at 1199–1211 (PEDKGQPGEDLRH) shows a compositional bias: basic and acidic residues.

In terms of processing, the precursor is cleaved by a furin endopeptidase. Glycosylated. Can be O-fucosylated by POFUT2 on a serine or a threonine residue found within the consensus sequence C1-X(2)-(S/T)-C2-G of the TSP type-1 repeat domains where C1 and C2 are the first and second cysteine residue of the repeat, respectively. Fucosylated repeats can then be further glycosylated by the addition of a beta-1,3-glucose residue by the glucosyltransferase, B3GALTL. Fucosylation mediates the efficient secretion of ADAMTS family members. Can also be C-glycosylated with one or two mannose molecules on tryptophan residues within the consensus sequence W-X-X-W of the TPRs, and N-glycosylated. These other glycosylations can also facilitate secretion. In terms of tissue distribution, expressed in retina and at low levels in brain, lung and placenta. High expression in fetal tissues.

The protein localises to the secreted. Its subcellular location is the extracellular space. It is found in the extracellular matrix. Its function is as follows. Has aminoprocollagen type I processing activity in the absence of ADAMTS2. Seems to be synthesized as a latent enzyme that requires activation to display aminoprocollagen peptidase activity. Cleaves lysyl oxidase LOX at a site downstream of its propeptide cleavage site to produce a short LOX form. This chain is A disintegrin and metalloproteinase with thrombospondin motifs 14 (ADAMTS14), found in Homo sapiens (Human).